The primary structure comprises 340 residues: Zinc finger protein 367 (340 aa).

Positions Gly-101–Ala-140 are disordered. Over residues Gly-127–Ala-140 the composition is skewed to basic and acidic residues. C2H2-type zinc fingers lie at residues Ile-157–His-179 and Tyr-185–His-209. The segment at Lys-280–Gln-317 is disordered. A coiled-coil region spans residues Gln-299–Asn-332. Position 300 is a phosphoserine (Ser-300). Residues Lys-307 to Gln-317 show a composition bias toward basic and acidic residues.

The protein belongs to the krueppel C2H2-type zinc-finger protein family. As to expression, expressed in bone marrow and ovary.

The protein localises to the nucleus. In terms of biological role, transcriptional activator. Isoform 1 may be involved in transcriptional activation of erythroid genes. This Mus musculus (Mouse) protein is Zinc finger protein 367 (Znf367).